The sequence spans 510 residues: NAD(P)H-quinone oxidoreductase subunit 2 B, chloroplastic (510 aa).

13 consecutive transmembrane segments (helical) span residues 24–44 (LLLF…GLIL), 57–77 (ISWF…VLLF), 99–119 (IFQF…VEYI), 124–144 (MAIT…MFLC), 149–169 (LITI…LSGY), 183–203 (YLLM…WLYG), 227–247 (PGIS…LSLA), 295–315 (WHLL…LIAI), 323–343 (MLAY…IVGD), 354–374 (YMLF…SFGL), 395–415 (ALSL…AGFF), 418–438 (LYLF…IGLL), and 482–502 (LSMI…NPII).

The protein belongs to the complex I subunit 2 family. NDH is composed of at least 16 different subunits, 5 of which are encoded in the nucleus.

It localises to the plastid. Its subcellular location is the chloroplast thylakoid membrane. It catalyses the reaction a plastoquinone + NADH + (n+1) H(+)(in) = a plastoquinol + NAD(+) + n H(+)(out). It carries out the reaction a plastoquinone + NADPH + (n+1) H(+)(in) = a plastoquinol + NADP(+) + n H(+)(out). NDH shuttles electrons from NAD(P)H:plastoquinone, via FMN and iron-sulfur (Fe-S) centers, to quinones in the photosynthetic chain and possibly in a chloroplast respiratory chain. The immediate electron acceptor for the enzyme in this species is believed to be plastoquinone. Couples the redox reaction to proton translocation, and thus conserves the redox energy in a proton gradient. This Lotus japonicus (Lotus corniculatus var. japonicus) protein is NAD(P)H-quinone oxidoreductase subunit 2 B, chloroplastic.